The sequence spans 221 residues: Deoxyribose-phosphate aldolase (221 aa).

The active-site Proton donor/acceptor is the D91. Residue K153 is the Schiff-base intermediate with acetaldehyde of the active site. Catalysis depends on K182, which acts as the Proton donor/acceptor.

It belongs to the DeoC/FbaB aldolase family. DeoC type 1 subfamily.

The protein resides in the cytoplasm. It carries out the reaction 2-deoxy-D-ribose 5-phosphate = D-glyceraldehyde 3-phosphate + acetaldehyde. It participates in carbohydrate degradation; 2-deoxy-D-ribose 1-phosphate degradation; D-glyceraldehyde 3-phosphate and acetaldehyde from 2-deoxy-alpha-D-ribose 1-phosphate: step 2/2. Catalyzes a reversible aldol reaction between acetaldehyde and D-glyceraldehyde 3-phosphate to generate 2-deoxy-D-ribose 5-phosphate. The chain is Deoxyribose-phosphate aldolase from Clostridium botulinum (strain Alaska E43 / Type E3).